Reading from the N-terminus, the 205-residue chain is Venom allergen 5 (205 aa).

Disulfide bonds link Cys4/Cys16, Cys8/Cys104, Cys28/Cys96, and Cys171/Cys188. Residues 47 to 190 (VNEHNRFRQK…MQHHYLICNY (144 aa)) form the SCP domain.

The protein belongs to the CRISP family. Venom allergen 5-like subfamily. In terms of tissue distribution, expressed by the venom gland.

It is found in the secreted. The polypeptide is Venom allergen 5 (Polistes fuscatus (Paper wasp)).